A 216-amino-acid chain; its full sequence is Maintenance of carboxysome distribution protein A (216 aa).

The ATP site is built by G16, G17, G19, K20, T21, T22, and Q45. T21 is a Mg(2+) binding site.

It belongs to the ParA family. McdA subfamily. In terms of assembly, self-associates, associates with McdB.

It localises to the cytoplasm. Its subcellular location is the nucleoid. It catalyses the reaction ATP + H2O = ADP + phosphate + H(+). McdA and McdB together mediate carboxysome positioning on the nucleoid and prevent their aggregation in the cell. McdA is an ATPase that forms dynamic gradients on the nucleoid in response to adapter protein McdB, which associates with carboxysomes. The interplay between McdA gradients on the nucleoid and McdB-bound carboxysomes result in the equal spacing of Cbs along the cell length. Functionally, incorrect positioning (aggregation) of carboxysomes results in reduced CO(2) fixation by encapsulated form 1 ribulose-1,5-bisphosphate carboxylase (RuBisCO, cbbL/cbbS), which leads to slower growth. The chain is Maintenance of carboxysome distribution protein A from Halothiobacillus neapolitanus (strain ATCC 23641 / c2) (Thiobacillus neapolitanus).